The sequence spans 1887 residues: Protein TIC 214 (1887 aa).

Transmembrane regions (helical) follow at residues 18–38 (IINS…FSIG), 64–84 (FITG…HLAL), 87–107 (PHTI…WNNH), 124–144 (LSIQ…HFIL), 172–192 (VGWL…LVWI), and 221–241 (IFSI…PSPI). Disordered regions lie at residues 248–300 (EASK…EGWD), 785–805 (REEQ…DNKR), and 1569–1603 (LPSN…NLSP). Positions 256–268 (VESEEERDVEIET) are enriched in acidic residues. Positions 1578–1597 (RSQETKEPPSQRERGSDIEN) are enriched in basic and acidic residues.

It belongs to the TIC214 family. Part of the Tic complex.

It is found in the plastid. Its subcellular location is the chloroplast inner membrane. Functionally, involved in protein precursor import into chloroplasts. May be part of an intermediate translocation complex acting as a protein-conducting channel at the inner envelope. The chain is Protein TIC 214 from Solanum tuberosum (Potato).